Reading from the N-terminus, the 257-residue chain is Glutamate racemase (257 aa).

Substrate contacts are provided by residues 12–13 and 44–45; these read DS and YG. The Proton donor/acceptor role is filled by cysteine 75. 76–77 is a substrate binding site; it reads NT. Cysteine 185 functions as the Proton donor/acceptor in the catalytic mechanism. 186–187 contacts substrate; it reads TH.

It belongs to the aspartate/glutamate racemases family.

It catalyses the reaction L-glutamate = D-glutamate. It functions in the pathway cell wall biogenesis; peptidoglycan biosynthesis. Functionally, provides the (R)-glutamate required for cell wall biosynthesis. The chain is Glutamate racemase from Clostridium botulinum (strain Okra / Type B1).